Consider the following 189-residue polypeptide: MRKIGIIGGTFDPPHYGHLLIANEVYHALDLEEVWFLPNQIPPHKQGRNITSIERRLHMLELATEAEEHFSICLEELSRKGPSYTYDTMLQLTKKYPDVQFHFIIGGDMVEYLPKWYNIEALLNLVTFVGVARPGYTLHTPYQITTVEIPEFAVSSSLLRERYKEKKTCKYLLPEKVQVYIERNGLYES.

This sequence belongs to the NadD family.

The catalysed reaction is nicotinate beta-D-ribonucleotide + ATP + H(+) = deamido-NAD(+) + diphosphate. The protein operates within cofactor biosynthesis; NAD(+) biosynthesis; deamido-NAD(+) from nicotinate D-ribonucleotide: step 1/1. In terms of biological role, catalyzes the reversible adenylation of nicotinate mononucleotide (NaMN) to nicotinic acid adenine dinucleotide (NaAD). This is Probable nicotinate-nucleotide adenylyltransferase from Bacillus cereus (strain G9842).